The sequence spans 194 residues: Peptidyl-tRNA hydrolase (194 aa).

Y17 serves as a coordination point for tRNA. Residue H22 is the Proton acceptor of the active site. TRNA is bound by residues Y68, N70, and N116.

This sequence belongs to the PTH family. Monomer.

Its subcellular location is the cytoplasm. It carries out the reaction an N-acyl-L-alpha-aminoacyl-tRNA + H2O = an N-acyl-L-amino acid + a tRNA + H(+). Its function is as follows. Hydrolyzes ribosome-free peptidyl-tRNAs (with 1 or more amino acids incorporated), which drop off the ribosome during protein synthesis, or as a result of ribosome stalling. Functionally, catalyzes the release of premature peptidyl moieties from peptidyl-tRNA molecules trapped in stalled 50S ribosomal subunits, and thus maintains levels of free tRNAs and 50S ribosomes. This is Peptidyl-tRNA hydrolase from Pseudomonas paraeruginosa (strain DSM 24068 / PA7) (Pseudomonas aeruginosa (strain PA7)).